A 137-amino-acid chain; its full sequence is MGVLSEFKAFAVKGNVVDMAVGIIIGAAFGKIVSSFVGDVIMPPIGLLIGGVDFSDLAITLKAAEGSAPAVVLAYGKFIQSVLDFVIVAFAIFMGVKAINRLKREEAVAPTLPPVPTKEEELLGEIRDLLKAQNNRP.

The next 2 helical transmembrane spans lie at 9–29 (AFAVKGNVVDMAVGIIIGAAF) and 79–99 (IQSVLDFVIVAFAIFMGVKAI).

The protein belongs to the MscL family. Homopentamer.

It localises to the cell inner membrane. In terms of biological role, channel that opens in response to stretch forces in the membrane lipid bilayer. May participate in the regulation of osmotic pressure changes within the cell. The chain is Large-conductance mechanosensitive channel from Pseudomonas fluorescens (strain Pf0-1).